Reading from the N-terminus, the 98-residue chain is Aspartyl/glutamyl-tRNA(Asn/Gln) amidotransferase subunit C (98 aa).

Residues 77 to 98 (NEAPNPEGDFFRVPQILNTDEE) form a disordered region.

Belongs to the GatC family. In terms of assembly, heterotrimer of A, B and C subunits.

It carries out the reaction L-glutamyl-tRNA(Gln) + L-glutamine + ATP + H2O = L-glutaminyl-tRNA(Gln) + L-glutamate + ADP + phosphate + H(+). The enzyme catalyses L-aspartyl-tRNA(Asn) + L-glutamine + ATP + H2O = L-asparaginyl-tRNA(Asn) + L-glutamate + ADP + phosphate + 2 H(+). In terms of biological role, allows the formation of correctly charged Asn-tRNA(Asn) or Gln-tRNA(Gln) through the transamidation of misacylated Asp-tRNA(Asn) or Glu-tRNA(Gln) in organisms which lack either or both of asparaginyl-tRNA or glutaminyl-tRNA synthetases. The reaction takes place in the presence of glutamine and ATP through an activated phospho-Asp-tRNA(Asn) or phospho-Glu-tRNA(Gln). This Crocosphaera subtropica (strain ATCC 51142 / BH68) (Cyanothece sp. (strain ATCC 51142)) protein is Aspartyl/glutamyl-tRNA(Asn/Gln) amidotransferase subunit C.